A 141-amino-acid chain; its full sequence is D-aminoacyl-tRNA deacylase (141 aa).

A Gly-cisPro motif, important for rejection of L-amino acids motif is present at residues 133 to 134 (GP).

This sequence belongs to the DTD family. As to quaternary structure, homodimer.

Its subcellular location is the cytoplasm. The catalysed reaction is glycyl-tRNA(Ala) + H2O = tRNA(Ala) + glycine + H(+). It catalyses the reaction a D-aminoacyl-tRNA + H2O = a tRNA + a D-alpha-amino acid + H(+). In terms of biological role, an aminoacyl-tRNA editing enzyme that deacylates mischarged D-aminoacyl-tRNAs. Also deacylates mischarged glycyl-tRNA(Ala), protecting cells against glycine mischarging by AlaRS. Acts via tRNA-based rather than protein-based catalysis; rejects L-amino acids rather than detecting D-amino acids in the active site. By recycling D-aminoacyl-tRNA to D-amino acids and free tRNA molecules, this enzyme counteracts the toxicity associated with the formation of D-aminoacyl-tRNA entities in vivo and helps enforce protein L-homochirality. In Beutenbergia cavernae (strain ATCC BAA-8 / DSM 12333 / CCUG 43141 / JCM 11478 / NBRC 16432 / NCIMB 13614 / HKI 0122), this protein is D-aminoacyl-tRNA deacylase.